The following is a 58-amino-acid chain: ATP synthase subunit a (58 aa).

Transmembrane regions (helical) follow at residues 11 to 31 and 35 to 55; these read EIFY…LTGL and VAIL…NDAI.

Belongs to the ATPase A chain family. As to quaternary structure, F-type ATPases have 2 components, CF(1) - the catalytic core - and CF(0) - the membrane proton channel. CF(1) has five subunits: alpha(3), beta(3), gamma(1), delta(1), epsilon(1). CF(0) has three main subunits: a, b and c.

The protein localises to the mitochondrion inner membrane. Its function is as follows. Mitochondrial membrane ATP synthase (F(1)F(0) ATP synthase or Complex V) produces ATP from ADP in the presence of a proton gradient across the membrane which is generated by electron transport complexes of the respiratory chain. F-type ATPases consist of two structural domains, F(1) - containing the extramembraneous catalytic core and F(0) - containing the membrane proton channel, linked together by a central stalk and a peripheral stalk. During catalysis, ATP synthesis in the catalytic domain of F(1) is coupled via a rotary mechanism of the central stalk subunits to proton translocation. Key component of the proton channel; it may play a direct role in the translocation of protons across the membrane. The protein is ATP synthase subunit a (ATP6) of Brassica tournefortii (Wild turnip).